The primary structure comprises 428 residues: Chaperone SurA (428 aa).

The first 20 residues, 1–20 (MKNWKTLLLGIAMIANTSFA), serve as a signal peptide directing secretion. PpiC domains lie at 171–272 (STEL…KVND) and 282–382 (VTEV…ELLD).

The protein resides in the periplasm. The enzyme catalyses [protein]-peptidylproline (omega=180) = [protein]-peptidylproline (omega=0). Its function is as follows. Chaperone involved in the correct folding and assembly of outer membrane proteins. Recognizes specific patterns of aromatic residues and the orientation of their side chains, which are found more frequently in integral outer membrane proteins. May act in both early periplasmic and late outer membrane-associated steps of protein maturation. The protein is Chaperone SurA of Escherichia coli O157:H7.